Consider the following 251-residue polypeptide: 14-3-3-like protein (251 aa).

It belongs to the 14-3-3 family.

In Fucus vesiculosus (Bladder wrack), this protein is 14-3-3-like protein.